Consider the following 685-residue polypeptide: Cilia- and flagella-associated protein 36 (685 aa).

The segment at Met-1–Ser-20 is disordered. Residues Ser-197–Gln-242 are a coiled coil. A compositionally biased stretch (low complexity) spans Thr-287–Thr-310. The disordered stretch occupies residues Thr-287 to Val-573. Over residues Glu-363–Pro-372 the composition is skewed to basic and acidic residues. A compositionally biased stretch (polar residues) spans Gly-410–Glu-434. 2 stretches are compositionally biased toward basic and acidic residues: residues Gly-439 to Tyr-456 and His-508 to Pro-557.

Belongs to the CFAP36 family. As to expression, expressed in amphid and phasmid ciliated neurons.

The protein resides in the cell projection. The protein localises to the cilium. Its subcellular location is the cytoplasm. It is found in the cytoskeleton. It localises to the cilium axoneme. The polypeptide is Cilia- and flagella-associated protein 36 (Caenorhabditis elegans).